A 151-amino-acid chain; its full sequence is UPAR/Ly6 domain-containing protein crok (151 aa).

Positions 1 to 23 are cleaved as a signal peptide; it reads MKTLEKYILFAIVLCCLLQLGQA. Residues 24 to 128 lie on the Lumenal side of the membrane; that stretch reads IKCWDCRSDN…KDGCNSAGIH (105 aa). 5 cysteine pairs are disulfide-bonded: cysteine 26–cysteine 68, cysteine 29–cysteine 37, cysteine 51–cysteine 85, cysteine 100–cysteine 114, and cysteine 116–cysteine 122. Asparagine 43 carries N-linked (GlcNAc...) asparagine glycosylation. Residue serine 124 is the site of GPI-anchor amidated serine attachment. Positions 125–151 are cleaved as a propeptide — removed in mature form; sequence AGIHRLGLMGVLTGTLLSVIVAHLLRQ. Residues 129 to 149 form a helical membrane-spanning segment; sequence RLGLMGVLTGTLLSVIVAHLL. Over 150–151 the chain is Cytoplasmic; the sequence is RQ.

The protein belongs to the quiver family.

It is found in the vesicle. Its subcellular location is the membrane. The protein localises to the endomembrane system. In terms of biological role, required for septate junction assembly, possibly by organizing the preassembly and transport of septate junction proteins including dlg1/disks large 1 and Nrx-IV/Neurexin-IV. Involved in paracellular barrier functions of trachea, hindgut and salivary gland mediated by epithelial cell septate junctions. The polypeptide is UPAR/Ly6 domain-containing protein crok (Drosophila melanogaster (Fruit fly)).